Reading from the N-terminus, the 299-residue chain is Acetylglutamate kinase (299 aa).

Residues 70 to 71 (GG), arginine 92, and asparagine 186 each bind substrate.

Belongs to the acetylglutamate kinase family. ArgB subfamily.

It is found in the cytoplasm. It carries out the reaction N-acetyl-L-glutamate + ATP = N-acetyl-L-glutamyl 5-phosphate + ADP. The protein operates within amino-acid biosynthesis; L-arginine biosynthesis; N(2)-acetyl-L-ornithine from L-glutamate: step 2/4. Its function is as follows. Catalyzes the ATP-dependent phosphorylation of N-acetyl-L-glutamate. This is Acetylglutamate kinase from Thermoanaerobacter pseudethanolicus (strain ATCC 33223 / 39E) (Clostridium thermohydrosulfuricum).